Here is a 429-residue protein sequence, read N- to C-terminus: BURP domain-containing protein 3 (429 aa).

The signal sequence occupies residues 1 to 21 (MDRLLACLLGFLLIASVGSHA). Positions 59-81 (GGGVHVDAGHGKPGGTTVDVGKG) are disordered. The 216-residue stretch at 213 to 428 (FFLEKDLHPG…PQDHVVWTRS (216 aa)) folds into the BURP domain.

In terms of tissue distribution, expressed in stems, leaves, shoot, panicles and stamen.

The chain is BURP domain-containing protein 3 (BURP3) from Oryza sativa subsp. japonica (Rice).